Consider the following 65-residue polypeptide: Large ribosomal subunit protein bL35 (65 aa).

2 stretches are compositionally biased toward basic residues: residues methionine 1–lysine 16 and histidine 31–arginine 45. The interval methionine 1–threonine 47 is disordered.

It belongs to the bacterial ribosomal protein bL35 family.

This chain is Large ribosomal subunit protein bL35, found in Leuconostoc citreum (strain KM20).